We begin with the raw amino-acid sequence, 276 residues long: Pantothenate synthetase (276 aa).

An ATP-binding site is contributed by 26 to 33; it reads MGFLHEGH. Histidine 33 serves as the catalytic Proton donor. Position 57 (glutamine 57) interacts with (R)-pantoate. Residue glutamine 57 coordinates beta-alanine. 142–145 provides a ligand contact to ATP; it reads GLKD. Residue glutamine 148 participates in (R)-pantoate binding. ATP-binding positions include isoleucine 171 and 179-182; that span reads KSSR.

It belongs to the pantothenate synthetase family. In terms of assembly, homodimer.

The protein resides in the cytoplasm. It carries out the reaction (R)-pantoate + beta-alanine + ATP = (R)-pantothenate + AMP + diphosphate + H(+). The protein operates within cofactor biosynthesis; (R)-pantothenate biosynthesis; (R)-pantothenate from (R)-pantoate and beta-alanine: step 1/1. Functionally, catalyzes the condensation of pantoate with beta-alanine in an ATP-dependent reaction via a pantoyl-adenylate intermediate. The protein is Pantothenate synthetase of Exiguobacterium sibiricum (strain DSM 17290 / CCUG 55495 / CIP 109462 / JCM 13490 / 255-15).